A 164-amino-acid chain; its full sequence is uncharacterized protein (164 aa).

The next 2 helical transmembrane spans lie at 11–31 (FYVN…PSLL) and 51–71 (CQQY…LVLV).

It localises to the membrane. This is an uncharacterized protein from Saccharomyces cerevisiae (strain ATCC 204508 / S288c) (Baker's yeast).